Reading from the N-terminus, the 306-residue chain is Pantothenate kinase (306 aa).

91–98 (GSVAVGKS) is an ATP binding site.

It belongs to the prokaryotic pantothenate kinase family.

It localises to the cytoplasm. It catalyses the reaction (R)-pantothenate + ATP = (R)-4'-phosphopantothenate + ADP + H(+). Its pathway is cofactor biosynthesis; coenzyme A biosynthesis; CoA from (R)-pantothenate: step 1/5. This chain is Pantothenate kinase (coaA), found in Streptococcus pneumoniae serotype 4 (strain ATCC BAA-334 / TIGR4).